Consider the following 535-residue polypeptide: Probable bifunctional tRNA threonylcarbamoyladenosine biosynthesis protein (535 aa).

The interval 1–323 is kae1; sequence MICLGLEGTA…YRTDMVEVNW (323 aa). The Fe cation site is built by His106, His110, and Tyr127. L-threonylcarbamoyladenylate is bound by residues 127 to 131, Asp159, Gly172, Glu176, and Asn256; that span reads YVSGG. Asp284 provides a ligand contact to Fe cation. A Protein kinase domain is found at 333–535; that stretch reads KIPEHLIGKG…DVERRARYVE (203 aa). ATP-binding positions include 339–347 and Lys360; that span reads IGKGAEADI. Asp451 serves as the catalytic Proton acceptor; for kinase activity.

The protein in the N-terminal section; belongs to the KAE1 / TsaD family. It in the C-terminal section; belongs to the protein kinase superfamily. Tyr protein kinase family. BUD32 subfamily. In terms of assembly, component of the KEOPS complex that consists of Kae1, Bud32, Cgi121 and Pcc1; the whole complex dimerizes. Fe(2+) serves as cofactor.

The protein resides in the cytoplasm. It catalyses the reaction L-seryl-[protein] + ATP = O-phospho-L-seryl-[protein] + ADP + H(+). It carries out the reaction L-threonyl-[protein] + ATP = O-phospho-L-threonyl-[protein] + ADP + H(+). The catalysed reaction is L-threonylcarbamoyladenylate + adenosine(37) in tRNA = N(6)-L-threonylcarbamoyladenosine(37) in tRNA + AMP + H(+). With respect to regulation, activity provided by the Kae1 region seems to be regulated via phosphorylation by the protein kinase Bud32, which is itself activated by Cgi121. Its function is as follows. Required for the formation of a threonylcarbamoyl group on adenosine at position 37 (t(6)A37) in tRNAs that read codons beginning with adenine. Is a component of the KEOPS complex that is probably involved in the transfer of the threonylcarbamoyl moiety of threonylcarbamoyl-AMP (TC-AMP) to the N6 group of A37. The Kae1 domain likely plays a direct catalytic role in this reaction. The Bud32 domain probably displays kinase activity that regulates Kae1 function. In vitro, exhibits low ATPase activity, but does not bind DNA and does not have endonuclease activity. The sequence is that of Probable bifunctional tRNA threonylcarbamoyladenosine biosynthesis protein from Methanocaldococcus jannaschii (strain ATCC 43067 / DSM 2661 / JAL-1 / JCM 10045 / NBRC 100440) (Methanococcus jannaschii).